A 402-amino-acid polypeptide reads, in one-letter code: CCA-adding enzyme (402 aa).

ATP contacts are provided by glycine 32 and arginine 35. Residues glycine 32 and arginine 35 each coordinate CTP. Mg(2+) is bound by residues aspartate 45 and aspartate 47. Residues arginine 116, aspartate 159, arginine 162, arginine 165, and arginine 168 each coordinate ATP. Residues arginine 116, aspartate 159, arginine 162, arginine 165, and arginine 168 each contribute to the CTP site.

The protein belongs to the tRNA nucleotidyltransferase/poly(A) polymerase family. Bacterial CCA-adding enzyme type 3 subfamily. Homodimer. It depends on Mg(2+) as a cofactor.

The catalysed reaction is a tRNA precursor + 2 CTP + ATP = a tRNA with a 3' CCA end + 3 diphosphate. It carries out the reaction a tRNA with a 3' CCA end + 2 CTP + ATP = a tRNA with a 3' CCACCA end + 3 diphosphate. Its function is as follows. Catalyzes the addition and repair of the essential 3'-terminal CCA sequence in tRNAs without using a nucleic acid template. Adds these three nucleotides in the order of C, C, and A to the tRNA nucleotide-73, using CTP and ATP as substrates and producing inorganic pyrophosphate. tRNA 3'-terminal CCA addition is required both for tRNA processing and repair. Also involved in tRNA surveillance by mediating tandem CCA addition to generate a CCACCA at the 3' terminus of unstable tRNAs. While stable tRNAs receive only 3'-terminal CCA, unstable tRNAs are marked with CCACCA and rapidly degraded. This chain is CCA-adding enzyme, found in Streptococcus pyogenes serotype M1.